Reading from the N-terminus, the 153-residue chain is SsrA-binding protein (153 aa).

Belongs to the SmpB family.

It localises to the cytoplasm. Functionally, required for rescue of stalled ribosomes mediated by trans-translation. Binds to transfer-messenger RNA (tmRNA), required for stable association of tmRNA with ribosomes. tmRNA and SmpB together mimic tRNA shape, replacing the anticodon stem-loop with SmpB. tmRNA is encoded by the ssrA gene; the 2 termini fold to resemble tRNA(Ala) and it encodes a 'tag peptide', a short internal open reading frame. During trans-translation Ala-aminoacylated tmRNA acts like a tRNA, entering the A-site of stalled ribosomes, displacing the stalled mRNA. The ribosome then switches to translate the ORF on the tmRNA; the nascent peptide is terminated with the 'tag peptide' encoded by the tmRNA and targeted for degradation. The ribosome is freed to recommence translation, which seems to be the essential function of trans-translation. The protein is SsrA-binding protein of Sulfurovum sp. (strain NBC37-1).